A 178-amino-acid polypeptide reads, in one-letter code: GTP-dependent dephospho-CoA kinase (178 aa).

Asp-43, Ile-44, Val-45, Asp-62, Lys-64, and Glu-120 together coordinate GTP.

The protein belongs to the GTP-dependent DPCK family.

The catalysed reaction is 3'-dephospho-CoA + GTP = GDP + CoA + H(+). It participates in cofactor biosynthesis; coenzyme A biosynthesis. Functionally, catalyzes the GTP-dependent phosphorylation of the 3'-hydroxyl group of dephosphocoenzyme A to form coenzyme A (CoA). The chain is GTP-dependent dephospho-CoA kinase from Natronomonas pharaonis (strain ATCC 35678 / DSM 2160 / CIP 103997 / JCM 8858 / NBRC 14720 / NCIMB 2260 / Gabara) (Halobacterium pharaonis).